A 72-amino-acid polypeptide reads, in one-letter code: Translation initiation factor IF-1 (72 aa).

The 72-residue stretch at 1 to 72 (MAKEDVIEVE…NRGRIIYRFK (72 aa)) folds into the S1-like domain.

It belongs to the IF-1 family. In terms of assembly, component of the 30S ribosomal translation pre-initiation complex which assembles on the 30S ribosome in the order IF-2 and IF-3, IF-1 and N-formylmethionyl-tRNA(fMet); mRNA recruitment can occur at any time during PIC assembly.

Its subcellular location is the cytoplasm. Its function is as follows. One of the essential components for the initiation of protein synthesis. Stabilizes the binding of IF-2 and IF-3 on the 30S subunit to which N-formylmethionyl-tRNA(fMet) subsequently binds. Helps modulate mRNA selection, yielding the 30S pre-initiation complex (PIC). Upon addition of the 50S ribosomal subunit IF-1, IF-2 and IF-3 are released leaving the mature 70S translation initiation complex. This is Translation initiation factor IF-1 from Syntrophomonas wolfei subsp. wolfei (strain DSM 2245B / Goettingen).